Reading from the N-terminus, the 457-residue chain is Ribulose bisphosphate carboxylase-like protein (457 aa).

Positions 199, 201, and 202 each coordinate Mg(2+). Lys-199 bears the N6-carboxylysine mark. The disordered stretch occupies residues 426–457 (AIAAFGKPAHGQAASPQPSEQASEPDAAGGDS).

This sequence belongs to the RuBisCO large chain family. Type IV subfamily. It depends on Mg(2+) as a cofactor.

Functionally, may be involved in sulfur metabolism and oxidative stress response. Does not show RuBisCO activity. The polypeptide is Ribulose bisphosphate carboxylase-like protein (Allochromatium vinosum (strain ATCC 17899 / DSM 180 / NBRC 103801 / NCIMB 10441 / D) (Chromatium vinosum)).